We begin with the raw amino-acid sequence, 465 residues long: Cysteine--tRNA ligase (465 aa).

Cysteine 28 lines the Zn(2+) pocket. Positions methionine 30 to histidine 40 match the 'HIGH' region motif. 3 residues coordinate Zn(2+): cysteine 209, histidine 234, and glutamate 238. The 'KMSKS' region signature appears at lysine 266–serine 270. Residue lysine 269 coordinates ATP.

It belongs to the class-I aminoacyl-tRNA synthetase family. Monomer. Zn(2+) serves as cofactor.

The protein resides in the cytoplasm. It carries out the reaction tRNA(Cys) + L-cysteine + ATP = L-cysteinyl-tRNA(Cys) + AMP + diphosphate. In Nitrosomonas europaea (strain ATCC 19718 / CIP 103999 / KCTC 2705 / NBRC 14298), this protein is Cysteine--tRNA ligase.